A 391-amino-acid chain; its full sequence is Tumor susceptibility gene 101 protein (391 aa).

An N-acetylalanine modification is found at Ala2. The UEV domain maps to 2–145 (AVSESQLKKM…GEEPPVFSRP (144 aa)). Residues 159-163 (PPNTS) form an interaction with CEP55 region. Residues 197–220 (YPATTSSQYPSQPPVTTVGPSRDG) are disordered. A compositionally biased stretch (polar residues) spans 200–215 (TTSSQYPSQPPVTTVG). Thr221 carries the post-translational modification Phosphothreonine. A coiled-coil region spans residues 237-317 (DKLRWRMKEE…NQSENNDIDE (81 aa)). Residues 321 to 324 (PTAP) carry the PTAP/PSAP motif motif. Residues 323–391 (APLYKQILNL…RKTAGLSDLY (69 aa)) form the SB domain.

This sequence belongs to the ubiquitin-conjugating enzyme family. UEV subfamily. Component of the ESCRT-I complex (endosomal sorting complex required for transport I) which consists of TSG101, VPS28, a VPS37 protein (VPS37A to -D) and MVB12A or MVB12B in a 1:1:1:1 stoichiometry. Interacts with VPS37A, VPS37B and VPS37C. Component of an ESCRT-I complex (endosomal sorting complex required for transport I) which consists of TSG101, VPS28, VPS37A and UBAP1 in a 1:1:1:1 stoichiometry. Interacts with DMAP1. Interacts with GMCL. Interacts with ubiquitin, stathmin and AATF. Interacts with HGS; the interaction mediates the association with the ESCRT-0 complex. Interacts with GGA1 and GGA3. Interacts (via UEV domain) with PDCD6IP/AIP1. Interacts with VPS28, SNF8 and VPS36. Self-associates. Interacts with MVB12A; the association appears to be mediated by the TSG101-VPS37 binary subcomplex. Interacts with VPS37D. Interacts with LRSAM1. Interacts with CEP55; the interaction is required for cytokinesis. Interacts with PDCD6. Interacts with LITAF. Interacts with murine leukemia virus Gag polyprotein (via PSAP motif). Interacts with MGRN1. Interacts with ARRDC1; recruits TSG101 to the plasma membrane. Post-translationally, monoubiquitinated at multiple sites by LRSAM1 and by MGRN1. Ubiquitination inactivates it, possibly by regulating its shuttling between an active membrane-bound protein and an inactive soluble form. Ubiquitination by MGRN1 requires the presence of UBE2D1. Ubiquitous. Higher expression in brain and mammary gland. Lower expression in liver and tumoral tissues.

It localises to the cytoplasm. It is found in the early endosome membrane. The protein localises to the late endosome membrane. Its subcellular location is the cytoskeleton. The protein resides in the microtubule organizing center. It localises to the centrosome. It is found in the midbody. The protein localises to the midbody ring. Its subcellular location is the nucleus. Functionally, component of the ESCRT-I complex, a regulator of vesicular trafficking process. Binds to ubiquitinated cargo proteins and is required for the sorting of endocytic ubiquitinated cargos into multivesicular bodies (MVBs). Mediates the association between the ESCRT-0 and ESCRT-I complex. Required for completion of cytokinesis; the function requires CEP55. May be involved in cell growth and differentiation. Acts as a negative growth regulator. Required for the exosomal release of SDCBP, CD63 and syndecan. It may also play a role in the extracellular release of microvesicles that differ from the exosomes. The polypeptide is Tumor susceptibility gene 101 protein (Tsg101) (Mus musculus (Mouse)).